The chain runs to 167 residues: Small ribosomal subunit protein uS3m (167 aa).

The transit peptide at 1–35 (MAWSASVRGLGQRVLACSRELPGAWRTLHTSAVCA) directs the protein to the mitochondrion.

The protein belongs to the universal ribosomal protein uS3 family. Component of the mitochondrial ribosome small subunit (28S) which comprises a 12S rRNA and about 30 distinct proteins.

The protein localises to the mitochondrion. In Mus musculus (Mouse), this protein is Small ribosomal subunit protein uS3m (Mrps24).